We begin with the raw amino-acid sequence, 313 residues long: Homoserine kinase (313 aa).

92-102 contacts ATP; sequence PPGRGLGSSGA.

This sequence belongs to the GHMP kinase family. Homoserine kinase subfamily.

The protein resides in the cytoplasm. The enzyme catalyses L-homoserine + ATP = O-phospho-L-homoserine + ADP + H(+). It functions in the pathway amino-acid biosynthesis; L-threonine biosynthesis; L-threonine from L-aspartate: step 4/5. Catalyzes the ATP-dependent phosphorylation of L-homoserine to L-homoserine phosphate. This is Homoserine kinase from Aeropyrum pernix (strain ATCC 700893 / DSM 11879 / JCM 9820 / NBRC 100138 / K1).